We begin with the raw amino-acid sequence, 331 residues long: tRNA-cytidine(32) 2-sulfurtransferase (331 aa).

The tract at residues methionine 1–glutamine 33 is disordered. Residues aspartate 8–alanine 23 show a composition bias toward low complexity. The PP-loop motif motif lies at serine 71–serine 76. [4Fe-4S] cluster is bound by residues cysteine 146, cysteine 149, and cysteine 237.

This sequence belongs to the TtcA family. In terms of assembly, homodimer. The cofactor is Mg(2+). Requires [4Fe-4S] cluster as cofactor.

Its subcellular location is the cytoplasm. It catalyses the reaction cytidine(32) in tRNA + S-sulfanyl-L-cysteinyl-[cysteine desulfurase] + AH2 + ATP = 2-thiocytidine(32) in tRNA + L-cysteinyl-[cysteine desulfurase] + A + AMP + diphosphate + H(+). It participates in tRNA modification. Catalyzes the ATP-dependent 2-thiolation of cytidine in position 32 of tRNA, to form 2-thiocytidine (s(2)C32). The sulfur atoms are provided by the cysteine/cysteine desulfurase (IscS) system. This Burkholderia orbicola (strain MC0-3) protein is tRNA-cytidine(32) 2-sulfurtransferase.